We begin with the raw amino-acid sequence, 527 residues long: Plant-specific TFIIB-related protein PTF2 (527 aa).

The TFIIB-type zinc finger occupies 1 to 30 (MRCKRCNGSNFERDEDTGNSYCGGCGTLRE).

Can form homodimer. Interacts with TBP2. Expressed in shoot apical meristems, root tips, primordia of lateral roots, inflorescences, developing pollen grains and embryos.

Its subcellular location is the nucleus. Functionally, plant-specific TFIIB-related protein that plays important roles in pollen germination and embryogenesis, possibly by regulating gene expression through interaction with TBP2 and the subunits of RNA polymerases. Binds double-stranded DNA in vitro. This is Plant-specific TFIIB-related protein PTF2 from Arabidopsis thaliana (Mouse-ear cress).